The sequence spans 120 residues: uncharacterized protein (120 aa).

Residues 22–44 form a helical membrane-spanning segment; the sequence is ITVASCIGAAQGALFSIASALLL. Asparagine 114 carries an N-linked (GlcNAc...) asparagine glycan.

The protein resides in the membrane. This is an uncharacterized protein from Saccharomyces cerevisiae (strain ATCC 204508 / S288c) (Baker's yeast).